Consider the following 272-residue polypeptide: Isoprenyl transferase (272 aa).

D32 is an active-site residue. D32 is a binding site for Mg(2+). Substrate-binding positions include 33 to 36 (GNGR), W37, R45, H49, and 77 to 79 (STE). Residue N80 is the Proton acceptor of the active site. Residues W81, R83, R200, and 206–208 (RIS) contribute to the substrate site. Residue E219 participates in Mg(2+) binding.

It belongs to the UPP synthase family. In terms of assembly, homodimer. It depends on Mg(2+) as a cofactor.

In terms of biological role, catalyzes the condensation of isopentenyl diphosphate (IPP) with allylic pyrophosphates generating different type of terpenoids. In Prochlorococcus marinus subsp. pastoris (strain CCMP1986 / NIES-2087 / MED4), this protein is Isoprenyl transferase.